Here is a 121-residue protein sequence, read N- to C-terminus: Transposase InsC for insertion element IS2A (121 aa).

The protein belongs to the transposase 8 family.

In terms of biological role, involved in the transposition of the insertion sequence IS2. The polypeptide is Transposase InsC for insertion element IS2A (insC1) (Escherichia coli (strain K12)).